The following is a 186-amino-acid chain: uncharacterized protein (186 aa).

2 consecutive CBS domains span residues 10-69 and 77-133; these read IMKK…KLPP and ISSG…IIST.

This is an uncharacterized protein from Methanocaldococcus jannaschii (strain ATCC 43067 / DSM 2661 / JAL-1 / JCM 10045 / NBRC 100440) (Methanococcus jannaschii).